Consider the following 170-residue polypeptide: Phosphopantetheine adenylyltransferase (170 aa).

S14 provides a ligand contact to substrate. Residues 14 to 15 (SF) and H22 each bind ATP. Substrate is bound by residues K46, L79, and R93. Residues 94–96 (GIR), E104, and 129–135 (IAEVSST) contribute to the ATP site.

Belongs to the bacterial CoaD family. As to quaternary structure, homohexamer. Mg(2+) is required as a cofactor.

Its subcellular location is the cytoplasm. It carries out the reaction (R)-4'-phosphopantetheine + ATP + H(+) = 3'-dephospho-CoA + diphosphate. Its pathway is cofactor biosynthesis; coenzyme A biosynthesis; CoA from (R)-pantothenate: step 4/5. Reversibly transfers an adenylyl group from ATP to 4'-phosphopantetheine, yielding dephospho-CoA (dPCoA) and pyrophosphate. This chain is Phosphopantetheine adenylyltransferase, found in Neisseria meningitidis serogroup C (strain 053442).